The sequence spans 325 residues: Beta-ketoacyl-[acyl-carrier-protein] synthase III (325 aa).

Active-site residues include cysteine 112 and histidine 250. The segment at 251 to 255 is ACP-binding; it reads QANIR. The active site involves asparagine 280.

It belongs to the thiolase-like superfamily. FabH family. In terms of assembly, homodimer.

Its subcellular location is the cytoplasm. It catalyses the reaction malonyl-[ACP] + acetyl-CoA + H(+) = 3-oxobutanoyl-[ACP] + CO2 + CoA. Its pathway is lipid metabolism; fatty acid biosynthesis. In terms of biological role, catalyzes the condensation reaction of fatty acid synthesis by the addition to an acyl acceptor of two carbons from malonyl-ACP. Catalyzes the first condensation reaction which initiates fatty acid synthesis and may therefore play a role in governing the total rate of fatty acid production. Possesses both acetoacetyl-ACP synthase and acetyl transacylase activities. Its substrate specificity determines the biosynthesis of branched-chain and/or straight-chain of fatty acids. The protein is Beta-ketoacyl-[acyl-carrier-protein] synthase III of Streptococcus mutans serotype c (strain ATCC 700610 / UA159).